The following is an 804-amino-acid chain: Leucine--tRNA ligase (804 aa).

The 'HIGH' region signature appears at P39 to H50. The 'KMSKS' region signature appears at K573 to S577. Residue K576 coordinates ATP.

It belongs to the class-I aminoacyl-tRNA synthetase family.

The protein localises to the cytoplasm. The enzyme catalyses tRNA(Leu) + L-leucine + ATP = L-leucyl-tRNA(Leu) + AMP + diphosphate. The polypeptide is Leucine--tRNA ligase (Lactobacillus johnsonii (strain CNCM I-12250 / La1 / NCC 533)).